Here is a 637-residue protein sequence, read N- to C-terminus: Threonine--tRNA ligase (637 aa).

The TGS domain maps to 1–61; the sequence is MIKITLKDGK…NEDSTLEILT (61 aa). Positions 242–532 are catalytic; sequence DHRKLGKELG…LTEHYAGAFP (291 aa). Positions 333, 384, and 509 each coordinate Zn(2+).

Belongs to the class-II aminoacyl-tRNA synthetase family. In terms of assembly, homodimer. Requires Zn(2+) as cofactor.

The protein resides in the cytoplasm. It carries out the reaction tRNA(Thr) + L-threonine + ATP = L-threonyl-tRNA(Thr) + AMP + diphosphate + H(+). Catalyzes the attachment of threonine to tRNA(Thr) in a two-step reaction: L-threonine is first activated by ATP to form Thr-AMP and then transferred to the acceptor end of tRNA(Thr). Also edits incorrectly charged L-seryl-tRNA(Thr). This chain is Threonine--tRNA ligase, found in Clostridium novyi (strain NT).